Here is a 709-residue protein sequence, read N- to C-terminus: Polyribonucleotide nucleotidyltransferase (709 aa).

Positions 486 and 492 each coordinate Mg(2+). In terms of domain architecture, KH spans 553 to 612 (PRIHTIKINPDKIKDVIGKGGSVIRALTEETGTTIEIEDDGTVKIAATDGEKAKHAISRI). The 69-residue stretch at 622-690 (GRIYAGKVTR…RQGRVRLSIK (69 aa)) folds into the S1 motif domain.

It belongs to the polyribonucleotide nucleotidyltransferase family. Component of the RNA degradosome, which is a multiprotein complex involved in RNA processing and mRNA degradation. It depends on Mg(2+) as a cofactor.

The protein localises to the cytoplasm. It carries out the reaction RNA(n+1) + phosphate = RNA(n) + a ribonucleoside 5'-diphosphate. Its function is as follows. Involved in mRNA degradation. Catalyzes the phosphorolysis of single-stranded polyribonucleotides processively in the 3'- to 5'-direction. The sequence is that of Polyribonucleotide nucleotidyltransferase from Photorhabdus luminescens (Xenorhabdus luminescens).